The primary structure comprises 438 residues: Probable phosphoglucosamine mutase (438 aa).

Ser91 acts as the Phosphoserine intermediate in catalysis. Ser91, Asp228, Asp230, and Asp232 together coordinate Mg(2+). Ser91 carries the phosphoserine modification.

Belongs to the phosphohexose mutase family. Mg(2+) serves as cofactor. Activated by phosphorylation.

The enzyme catalyses alpha-D-glucosamine 1-phosphate = D-glucosamine 6-phosphate. Its function is as follows. Catalyzes the conversion of glucosamine-6-phosphate to glucosamine-1-phosphate. The protein is Probable phosphoglucosamine mutase of Methanocella arvoryzae (strain DSM 22066 / NBRC 105507 / MRE50).